Reading from the N-terminus, the 776-residue chain is Mitochondrial intermediate peptidase (776 aa).

The N-terminal 38 residues, 1 to 38, are a transit peptide targeting the mitochondrion; that stretch reads MLNSARTVLARHSARQLYRFRGCLVHQQRHRHQVQRTL. Zn(2+) is bound at residue histidine 560. The active site involves glutamate 561. Zn(2+)-binding residues include histidine 564 and histidine 567.

The protein belongs to the peptidase M3 family. It depends on Zn(2+) as a cofactor.

The protein resides in the mitochondrion matrix. It carries out the reaction Release of an N-terminal octapeptide as second stage of processing of some proteins imported into the mitochondrion.. Its function is as follows. Cleaves proteins, imported into the mitochondrion, to their mature size. While most mitochondrial precursor proteins are processed to the mature form in one step by mitochondrial processing peptidase (MPP), the sequential cleavage by MIP of an octapeptide after initial processing by MPP is a required step for a subgroup of nuclear-encoded precursor proteins destined for the matrix or the inner membrane. The protein is Mitochondrial intermediate peptidase (OCT1) of Coprinopsis cinerea (strain Okayama-7 / 130 / ATCC MYA-4618 / FGSC 9003) (Inky cap fungus).